A 193-amino-acid polypeptide reads, in one-letter code: Auxin-responsive protein IAA23 (193 aa).

The span at 1 to 12 (MSTSSGADSSPP) shows a compositional bias: polar residues. The disordered stretch occupies residues 1-66 (MSTSSGADSS…SPKARAVGWP (66 aa)). The segment covering 21–36 (TALTLALPGSSSSSSS) has biased composition (low complexity). Positions 23–27 (LTLAL) match the EAR-like (transcriptional repression) motif. Residues 39–53 (DPERKRAAHADHADA) are compositionally biased toward basic and acidic residues. A PB1 domain is found at 83–191 (AKLVKVAVDG…EAVNLSPRRS (109 aa)).

The protein belongs to the Aux/IAA family. As to quaternary structure, homodimers and heterodimers. Highly expressed in roots. Expressed in seedlings.

The protein resides in the nucleus. Its function is as follows. Aux/IAA proteins are short-lived transcriptional factors that function as repressors of early auxin response genes at low auxin concentrations. The sequence is that of Auxin-responsive protein IAA23 (IAA23) from Oryza sativa subsp. japonica (Rice).